Consider the following 380-residue polypeptide: GATOR1 complex protein NPRL2 (380 aa).

Residues 1-133 (MGSGCRIECI…SKQKLVPIMT (133 aa)) are interaction with PDPK1. Arginine 78 contributes to the GDP binding site. Arginine 78 carries the asymmetric dimethylarginine modification. Residues lysine 158 and lysine 357 each participate in a glycyl lysine isopeptide (Lys-Gly) (interchain with G-Cter in ubiquitin) cross-link.

The protein belongs to the NPR2 family. Within the GATOR complex, component of the GATOR1 subcomplex, made of DEPDC5, NPRL2 and NPRL3. GATOR1 mediates the strong interaction of the GATOR complex with small GTPases Rag (RagA/RRAGA, RagB/RRAGB, RagC/RRAGC and/or RagD/RRAGD) heterodimers. GATOR1 interacts with GPR155/LYCHOS; interaction takes place in presence of cholesterol and prevents interaction between GATOR1 and KICSTOR. Interacts with PDPK1. In the presence of abundant amino acids, ubiquitinated at Lys-158 and Lys-357 via 'Lys-6'-linked ubiquitination by the WDR24 component of the GATOR2 complex, thereby inhibiting the GATOR1 complex and promoting mTORC1 activation. Post-translationally, asymmetric dimethylation at Arg-78 by PRMT1 inhibits the GTPase activator activity of the GATOR1 complex and consequently inducing timely mTORC1 activation under methionine-sufficient conditions. As to expression, most abundant in skeletal muscle, followed by brain, liver and pancreas, with lower amounts in lung, kidney, placenta and heart. Expressed in the frontal lobe cortex as well as in the temporal, parietal, and occipital lobes. Expressed in most lung cancer cell lines tested.

Its subcellular location is the lysosome membrane. Functionally, catalytic component of the GATOR1 complex, a multiprotein complex that functions as an inhibitor of the amino acid-sensing branch of the mTORC1 pathway. In response to amino acid depletion, the GATOR1 complex has GTPase activating protein (GAP) activity and strongly increases GTP hydrolysis by RagA/RRAGA (or RagB/RRAGB) within heterodimeric Rag complexes, thereby turning them into their inactive GDP-bound form, releasing mTORC1 from lysosomal surface and inhibiting mTORC1 signaling. In the presence of abundant amino acids, the GATOR1 complex is ubiquitinated and inhibited by GATOR2. Within the GATOR1 complex, NPRL2 constitutes the catalytic subunit that mediates the GTPase activator activity and under methionine-sufficient conditions, the GTPase activator activity is inhibited by PRMT1 through methylation and consequently inducing timely mTORC1 activation. Suppresses Src-dependent tyrosine phosphorylation and activation of PDPK1 and its downstream signaling. Down-regulates PDPK1 kinase activity by interfering with tyrosine phosphorylation at 'Tyr-9', 'Tyr-373' and 'Tyr-376' residues. May act as a tumor suppressor. Suppresses cell growth and enhances sensitivity to various anticancer drugs. In Homo sapiens (Human), this protein is GATOR1 complex protein NPRL2.